The chain runs to 305 residues: tRNA dimethylallyltransferase (305 aa).

Gly-15 to Ser-22 lines the ATP pocket. Thr-17 to Ser-22 serves as a coordination point for substrate. Interaction with substrate tRNA stretches follow at residues Asp-40–Gln-43 and Gln-164–Arg-168.

This sequence belongs to the IPP transferase family. In terms of assembly, monomer. Mg(2+) is required as a cofactor.

The enzyme catalyses adenosine(37) in tRNA + dimethylallyl diphosphate = N(6)-dimethylallyladenosine(37) in tRNA + diphosphate. Catalyzes the transfer of a dimethylallyl group onto the adenine at position 37 in tRNAs that read codons beginning with uridine, leading to the formation of N6-(dimethylallyl)adenosine (i(6)A). In Sinorhizobium medicae (strain WSM419) (Ensifer medicae), this protein is tRNA dimethylallyltransferase.